A 797-amino-acid chain; its full sequence is Glycoprotein gp2 (797 aa).

An N-terminal signal peptide occupies residues 1–25 (MGFIYARKLLLCMAVSIYAIGSTTT). Disordered regions lie at residues 24–188 (TTTE…TTAA) and 212–549 (AATT…EIVP). The segment covering 212 to 373 (AATTTAATTT…PDSSTGSTST (162 aa)) has biased composition (low complexity). The span at 374 to 394 (AEPSSTFTLTPSTATPSTDQF) shows a compositional bias: polar residues. Low complexity-rich tracts occupy residues 395-430 (TGSS…EAST) and 445-457 (TPDG…NTTP). The segment covering 466 to 492 (FADTQQTPDNGVSTQHTTINDHTTANA) has biased composition (polar residues). A compositionally biased stretch (basic residues) spans 495 to 505 (HAGHHRGRAGG). Residue asparagine 590 is glycosylated (N-linked (GlcNAc...) asparagine; by host). A helical membrane pass occupies residues 766–790 (FALVAATTLTVTILCLLCCLYCMLT).

It localises to the virion membrane. Its function is as follows. Virulence factor. This is Glycoprotein gp2 (EUs4) from Equine herpesvirus 1 (strain Ab4p) (EHV-1).